A 318-amino-acid chain; its full sequence is Pyrimidine-specific ribonucleoside hydrolase RihA (318 aa).

Residue histidine 240 is part of the active site.

The protein belongs to the IUNH family. RihA subfamily.

In terms of biological role, hydrolyzes cytidine or uridine to ribose and cytosine or uracil, respectively. The sequence is that of Pyrimidine-specific ribonucleoside hydrolase RihA from Shewanella oneidensis (strain ATCC 700550 / JCM 31522 / CIP 106686 / LMG 19005 / NCIMB 14063 / MR-1).